A 168-amino-acid chain; its full sequence is 2-C-methyl-D-erythritol 2,4-cyclodiphosphate synthase (168 aa).

A divalent metal cation is bound by residues Asp13 and His15. Residues 13-15 and 39-40 each bind 4-CDP-2-C-methyl-D-erythritol 2-phosphate; these read DVH and HS. His47 provides a ligand contact to a divalent metal cation. Residues 61-63, 66-70, Phe144, and Arg147 each bind 4-CDP-2-C-methyl-D-erythritol 2-phosphate; these read DIG and FPDTD.

Belongs to the IspF family. As to quaternary structure, homotrimer. The cofactor is a divalent metal cation.

The catalysed reaction is 4-CDP-2-C-methyl-D-erythritol 2-phosphate = 2-C-methyl-D-erythritol 2,4-cyclic diphosphate + CMP. Its pathway is isoprenoid biosynthesis; isopentenyl diphosphate biosynthesis via DXP pathway; isopentenyl diphosphate from 1-deoxy-D-xylulose 5-phosphate: step 4/6. In terms of biological role, involved in the biosynthesis of isopentenyl diphosphate (IPP) and dimethylallyl diphosphate (DMAPP), two major building blocks of isoprenoid compounds. Catalyzes the conversion of 4-diphosphocytidyl-2-C-methyl-D-erythritol 2-phosphate (CDP-ME2P) to 2-C-methyl-D-erythritol 2,4-cyclodiphosphate (ME-CPP) with a corresponding release of cytidine 5-monophosphate (CMP). The polypeptide is 2-C-methyl-D-erythritol 2,4-cyclodiphosphate synthase (Ralstonia nicotianae (strain ATCC BAA-1114 / GMI1000) (Ralstonia solanacearum)).